The following is a 129-amino-acid chain: ATP synthase epsilon chain (129 aa).

It belongs to the ATPase epsilon chain family. F-type ATPases have 2 components, CF(1) - the catalytic core - and CF(0) - the membrane proton channel. CF(1) has five subunits: alpha(3), beta(3), gamma(1), delta(1), epsilon(1). CF(0) has three main subunits: a, b and c.

It is found in the cell inner membrane. Functionally, produces ATP from ADP in the presence of a proton gradient across the membrane. The protein is ATP synthase epsilon chain of Campylobacter jejuni subsp. jejuni serotype O:2 (strain ATCC 700819 / NCTC 11168).